We begin with the raw amino-acid sequence, 1058 residues long: Leucine--tRNA ligase, cytoplasmic (1058 aa).

Residues 48-58 carry the 'HIGH' region motif; the sequence is PYMNGRLHVGH. The short motif at 711–715 is the 'KMSKS' region element; sequence KMSKS. Lys-714 is a binding site for ATP.

This sequence belongs to the class-I aminoacyl-tRNA synthetase family.

It localises to the cytoplasm. It catalyses the reaction tRNA(Leu) + L-leucine + ATP = L-leucyl-tRNA(Leu) + AMP + diphosphate. The chain is Leucine--tRNA ligase, cytoplasmic (leuS) from Dictyostelium discoideum (Social amoeba).